We begin with the raw amino-acid sequence, 248 residues long: Geranylgeranylglyceryl phosphate synthase (248 aa).

Aspartate 25 and serine 50 together coordinate Mg(2+). Sn-glycerol 1-phosphate is bound by residues 170 to 176 (YLEAGSG), 201 to 202 (GG), and 223 to 224 (GT).

It belongs to the GGGP/HepGP synthase family. Group II subfamily. Mg(2+) is required as a cofactor.

It is found in the cytoplasm. The enzyme catalyses sn-glycerol 1-phosphate + (2E,6E,10E)-geranylgeranyl diphosphate = sn-3-O-(geranylgeranyl)glycerol 1-phosphate + diphosphate. It functions in the pathway membrane lipid metabolism; glycerophospholipid metabolism. Functionally, prenyltransferase that catalyzes the transfer of the geranylgeranyl moiety of geranylgeranyl diphosphate (GGPP) to the C3 hydroxyl of sn-glycerol-1-phosphate (G1P). This reaction is the first ether-bond-formation step in the biosynthesis of archaeal membrane lipids. This chain is Geranylgeranylglyceryl phosphate synthase, found in Methanococcus aeolicus (strain ATCC BAA-1280 / DSM 17508 / OCM 812 / Nankai-3).